The chain runs to 532 residues: MAGLFKDIWHAMTSYDRHAGIDSPYRTGRHVPLNRNSGLAGVTTASDSRADINSPYLQGDGRGSTMSFDTAYGGRAISPMPSPANGGPYSPGLVSQRQSVHQDAFDVHSPTGEIPMQNFQNGGPPPPPVASSWEKIDRWAEENYPELFDQLGEGCTVNDLNELEYQLDCTLPQDLRQSLQIHDGQERGGLPTGIIFSSMLLDCEEMVQEWENWKTVNQEFMLDPVLVKRQSQAFAAQASSSKDAPNRNQNWRQELLNKQDSVPPAAIQKAYAHPAWIPLVRDWGGNNLAVDLAPGPKGHWGQIILFGRDYDTKYVVARSWAHFLAMVAEDLSSGRWFVDEDTNELKLREFKATRVEPSYFEILRWRMDQKYGRTANKRKSMAPSMASASGMRSPPTPGSPYQSPTEHNEPRGRSLHRLTGTSPMSSPIRPGYGKPSPLARVAEEAPPTTSLTASNASLEAKAADNLMELNTPRTSGEHSKEDIKVNEDSPAKERTSEDKEKKPETEANGKATESKGKQTTVEDAEDMKDIEI.

Positions 374-532 (TANKRKSMAP…DAEDMKDIEI (159 aa)) are disordered. Low complexity predominate over residues 381-393 (MAPSMASASGMRS). Residues 447 to 457 (PTTSLTASNAS) are compositionally biased toward polar residues. Residues 475–516 (SGEHSKEDIKVNEDSPAKERTSEDKEKKPETEANGKATESKG) show a composition bias toward basic and acidic residues.

It belongs to the KNR4/SMI1 family.

Its function is as follows. Involved in the regulation of 1,3-beta-glucan synthase activity and cell-wall formation. In Neurospora crassa (strain ATCC 24698 / 74-OR23-1A / CBS 708.71 / DSM 1257 / FGSC 987), this protein is Glucan synthesis regulatory protein (cot-2).